Consider the following 72-residue polypeptide: MHNESTEHRIAELESRLAFQETTIEDLNAAITKHELELAKMREQLKIMVEKIKASQPSMIASQAEETPPPHY.

Belongs to the SlyX family.

In Cronobacter sakazakii (strain ATCC BAA-894) (Enterobacter sakazakii), this protein is Protein SlyX.